The following is a 719-amino-acid chain: Leucine-rich repeat and fibronectin type-III domain-containing protein 5 (719 aa).

The first 17 residues, 1 to 17 (MEKILFYLFLIGIAVKA), serve as a signal peptide directing secretion. Residues 18–51 (QICPKRCVCQILSPNLATLCAKKGLLFVPPNIDR) form the LRRNT domain. Topologically, residues 18-529 (QICPKRCVCQ…MQSQFLGGTM (512 aa)) are extracellular. LRR repeat units follow at residues 52–73 (RTVELRLADNFVTNIKRKDFAN), 76–97 (SLVDLTLSRNTISFITPHAFAD), 100–121 (NLRALHLNSNRLTKITNDMFSG), 124–145 (NLHHLILNNNQLTLISSTAFDD), 148–169 (ALEELDLSYNNLETIPWDAVEK), 172–193 (SLHTLSLDHNMIDNIPKGTFSH), and 196–217 (KMTRLDVTSNKLQKLPPDPLFQ). The N-linked (GlcNAc...) asparagine glycan is linked to asparagine 73. An LRRCT domain is found at 240–286 (NPLHCNCELLWLRRLSREDDLETCASPPLLTGRYFWSIPEEEFLCEP). Residues 287–373 (PLITRHTHEM…GEATQIVDLH (87 aa)) form the Ig-like domain. Cysteine 308 and cysteine 357 are joined by a disulfide. Asparagine 330, asparagine 339, asparagine 382, asparagine 406, and asparagine 452 each carry an N-linked (GlcNAc...) asparagine glycan. Positions 385 to 414 (NHIHEPDPGSSDISTSTKSGSNTSSSNGDT) are disordered. Low complexity predominate over residues 393 to 414 (GSSDISTSTKSGSNTSSSNGDT). In terms of domain architecture, Fibronectin type-III spans 414 to 503 (TKLSQDKIVV…ITSLTATRVV (90 aa)). The helical transmembrane segment at 530-550 (IIIIGGIIVASVLVFIIILMI) threads the bilayer. Residues 551-719 (RYKVCNNNGQ…VQETQRLELI (169 aa)) are Cytoplasmic-facing. The span at 615-627 (ETCSSQDSSTTTS) shows a compositional bias: low complexity. The disordered stretch occupies residues 615 to 694 (ETCSSQDSST…SVTEGPTSKR (80 aa)). Polar residues-rich tracts occupy residues 628 to 641 (ALPPSWTSSTSVSQ) and 649 to 677 (TKPSTEPQNEAVTNVESQNTNRNNSTALQ).

It belongs to the LRFN family. As to quaternary structure, can form heteromeric complexes with LRFN1, LRFN2, LRFN3 and LFRN4. Able to form homomeric complexes across cell junctions, between adjacent cells. Does not interact with DLG1, DLG2, DLG3 and DLG4.

It is found in the membrane. Cell adhesion molecule that mediates homophilic cell-cell adhesion in a Ca(2+)-independent manner. Promotes neurite outgrowth in hippocampal neurons. The chain is Leucine-rich repeat and fibronectin type-III domain-containing protein 5 (LRFN5) from Homo sapiens (Human).